Reading from the N-terminus, the 362-residue chain is N-acylethanolamine-hydrolyzing acid amidase (362 aa).

The first 33 residues, 1 to 33 (MGTLATRAACHGAHLALALLLLLSLSGPWLSAV), serve as a signal peptide directing secretion. Residues N42 and N112 are each glycosylated (N-linked (GlcNAc...) asparagine). Catalysis depends on C131, which acts as the Nucleophile. N-linked (GlcNAc...) asparagine glycosylation is found at N314 and N338.

Belongs to the acid ceramidase family. As to quaternary structure, heterodimer of an alpha and a beta subunit, produced by autocatalytic cleavage. N-glycosylated. Tunicamycin treatment causes a reduction in specific activity against N-palmitoylethanolamine. In terms of processing, autoproteolytic cleavage at pH 4.5 gives rise to the alpha and beta subunit. Cleavage gives rise to a conformation change that activates the enzyme. The same catalytic Cys residue mediates the autoproteolytic cleavage and subsequent hydrolysis of lipid substrates.

Its subcellular location is the lysosome. It is found in the membrane. The catalysed reaction is N-hexadecanoylethanolamine + H2O = ethanolamine + hexadecanoate. The enzyme catalyses an N-(long-chain fatty acyl)ethanolamine + H2O = a long-chain fatty acid + ethanolamine. It catalyses the reaction N-dodecanoylethanolamine + H2O = dodecanoate + ethanolamine. It carries out the reaction N-tetradecanoylethanolamine + H2O = tetradecanoate + ethanolamine. The catalysed reaction is an N-acylsphing-4-enine + H2O = sphing-4-enine + a fatty acid. The enzyme catalyses N-hexadecanoylsphing-4-enine + H2O = sphing-4-enine + hexadecanoate. It catalyses the reaction N-dodecanoylsphing-4-enine + H2O = dodecanoate + sphing-4-enine. It functions in the pathway lipid metabolism; fatty acid metabolism. Its function is as follows. Degrades bioactive fatty acid amides to their corresponding acids, with the following preference: N-palmitoylethanolamine &gt; N-myristoylethanolamine &gt; N-stearoylethanolamine &gt; N-oleoylethanolamine &gt; N-linoleoylethanolamine &gt; N-arachidonoylethanolamine. The polypeptide is N-acylethanolamine-hydrolyzing acid amidase (Mus musculus (Mouse)).